A 1129-amino-acid polypeptide reads, in one-letter code: Phytochrome A type 3 (1129 aa).

The segment covering M1–R21 has biased composition (low complexity). Residues M1–A24 are disordered. The 186-residue stretch at S217–F402 folds into the GAF domain. C322 contacts phytochromobilin. PAS domains are found at residues V618–K688 and V748–C822. The region spanning Y902–S1122 is the Histidine kinase domain.

This sequence belongs to the phytochrome family. Homodimer. Contains one covalently linked phytochromobilin chromophore.

Functionally, regulatory photoreceptor which exists in two forms that are reversibly interconvertible by light: the Pr form that absorbs maximally in the red region of the spectrum and the Pfr form that absorbs maximally in the far-red region. Photoconversion of Pr to Pfr induces an array of morphogenic responses, whereas reconversion of Pfr to Pr cancels the induction of those responses. Pfr controls the expression of a number of nuclear genes including those encoding the small subunit of ribulose-bisphosphate carboxylase, chlorophyll A/B binding protein, protochlorophyllide reductase, rRNA, etc. It also controls the expression of its own gene(s) in a negative feedback fashion. This chain is Phytochrome A type 3 (PHYA3), found in Avena sativa (Oat).